The primary structure comprises 637 residues: Dihydrolipoyllysine-residue acetyltransferase component of pyruvate dehydrogenase complex, mitochondrial (637 aa).

The transit peptide at 1–85 (MWRVCVRRAQ…LLGSPGRRSY (85 aa)) directs the protein to the mitochondrion. A disordered region spans residues 80 to 100 (PGRRSYSLPPHQKVPLPSLSP). A Lipoyl-binding 1 domain is found at 90–166 (HQKVPLPSLS…PIGSIICITV (77 aa)). Ser-99 bears the Phosphoserine mark. Lys-131 carries the N6-lipoyllysine modification. 2 disordered regions span residues 189 to 219 (QAAA…PPHM) and 307 to 340 (LKPQ…PAGP). Over residues 201-211 (AAPTAPSAKAP) the composition is skewed to low complexity. One can recognise a Lipoyl-binding 2 domain in the interval 218-287 (HMQVSAVGEQ…PLGAPLCIIV (70 aa)). Residues 310 to 321 (QAPPPVPPPVAA) show a composition bias toward pro residues. Residues 322–333 (APPTAQPLAPTP) show a composition bias toward low complexity. The region spanning 345 to 382 (FVSPLAKKLAAERGIDLTQVKGTGPEGRIIKKDIDSFV) is the Peripheral subunit-binding (PSBD) domain. Arg-451 contacts CoA. Position 456 is an N6-acetyllysine (Lys-456). N6-succinyllysine is present on Lys-463. Ser-465 is a binding site for CoA. At Lys-537 the chain carries N6-succinyllysine. CoA-binding residues include Ser-556, Asn-557, and Gly-581. Catalysis depends on residues His-610 and Asp-614.

This sequence belongs to the 2-oxoacid dehydrogenase family. In terms of assembly, part of the pyruvate dehydrogenase complex (PDHc) that is a multi-enzyme complex composed of multiple copies of three enzymes, pyruvate dehydrogenase (subunits PDH1A and PDHB, E1 component), dihydrolipoamide acetyltransferase (DLAT, E2 component), and dihydrolipoamide dehydrogenase (DLD, E3 component) to which is added an additional protein the E3-binding protein (PDHX, E3BP). In terms of structural architecture, the E2 and E3BP components assemble into a 60meric central core with icosahedral symmetry. The central core is decorated with E1 and E3 proteins. Currently, two alternative models for the E2:E3BP stoichiometry are considered as being either 48:12 (E2(48)-E3BP(12)) or 40:20 (E2(40)-E3BP(20)). Interacts with PDK2 and PDK3. Interacts with SIRT4. Interacts with PDHB. The cofactor is (R)-lipoate. Delipoylated at Lys-131 by SIRT4, delipoylation decreases the PHD complex activity. As to expression, detected at higher levels in cauda epididymal spermatazoa than in caput epididymal spermatazoa (at protein level).

The protein resides in the mitochondrion matrix. The enzyme catalyses N(6)-[(R)-dihydrolipoyl]-L-lysyl-[protein] + acetyl-CoA = N(6)-[(R)-S(8)-acetyldihydrolipoyl]-L-lysyl-[protein] + CoA. Its function is as follows. As part of the pyruvate dehydrogenase complex, catalyzes the transfers of an acetyl group to a lipoic acid moiety. The pyruvate dehydrogenase complex, catalyzes the overall conversion of pyruvate to acetyl-CoA and CO(2), and thereby links cytoplasmic glycolysis and the mitochondrial tricarboxylic acid (TCA) cycle. In Mesocricetus auratus (Golden hamster), this protein is Dihydrolipoyllysine-residue acetyltransferase component of pyruvate dehydrogenase complex, mitochondrial.